A 483-amino-acid polypeptide reads, in one-letter code: Glutamyl-tRNA(Gln) amidotransferase subunit A (483 aa).

Residues lysine 76 and serine 151 each act as charge relay system in the active site. Serine 175 functions as the Acyl-ester intermediate in the catalytic mechanism.

Belongs to the amidase family. GatA subfamily. As to quaternary structure, heterotrimer of A, B and C subunits.

It catalyses the reaction L-glutamyl-tRNA(Gln) + L-glutamine + ATP + H2O = L-glutaminyl-tRNA(Gln) + L-glutamate + ADP + phosphate + H(+). Allows the formation of correctly charged Gln-tRNA(Gln) through the transamidation of misacylated Glu-tRNA(Gln) in organisms which lack glutaminyl-tRNA synthetase. The reaction takes place in the presence of glutamine and ATP through an activated gamma-phospho-Glu-tRNA(Gln). The chain is Glutamyl-tRNA(Gln) amidotransferase subunit A from Nitrosospira multiformis (strain ATCC 25196 / NCIMB 11849 / C 71).